Consider the following 527-residue polypeptide: Protein SDS24 (527 aa).

2 stretches are compositionally biased toward low complexity: residues 1–22 and 55–74; these read MAST…LPTS and TPPT…TPAP. The segment at 1–75 is disordered; that stretch reads MASTSNTFPP…PGCAATPAPL (75 aa). Position 94 is a phosphoserine (Ser94). 4 CBS domains span residues 114-175, 198-256, 283-342, and 443-512; these read IEQN…KITV, LTPK…NARS, TSRQ…QYPL, and LNSH…GNKE. Residues 424 to 447 are compositionally biased toward low complexity; it reads AQSSANGATPMSKSSSSTSLNSHS. Disordered regions lie at residues 424–478 and 508–527; these read AQSS…TNTP and TGNK…SIAM. Ser458 and Ser524 each carry phosphoserine.

Belongs to the SDS23 family.

The protein resides in the cytoplasm. Its subcellular location is the nucleus. Involved in DNA replication and cell separation during budding. The chain is Protein SDS24 (SDS24) from Saccharomyces cerevisiae (strain YJM789) (Baker's yeast).